Reading from the N-terminus, the 128-residue chain is Ribonuclease pancreatic (128 aa).

Residues 1–13 (GESRAEKFQRQHM) show a composition bias toward basic and acidic residues. The segment at 1–24 (GESRAEKFQRQHMDSGSSPSSSST) is disordered. Residues lysine 7 and arginine 10 each contribute to the substrate site. Histidine 12 functions as the Proton acceptor in the catalytic mechanism. 4 cysteine pairs are disulfide-bonded: cysteine 26–cysteine 84, cysteine 40–cysteine 95, cysteine 58–cysteine 110, and cysteine 65–cysteine 72. N-linked (GlcNAc...) asparagine glycosylation occurs at asparagine 34. Residues 41 to 45 (KSVNT), lysine 66, and arginine 85 each bind substrate. The active-site Proton donor is histidine 119.

Belongs to the pancreatic ribonuclease family. As to quaternary structure, monomer. Interacts with and forms tight 1:1 complexes with RNH1. Dimerization of two such complexes may occur. Interaction with RNH1 inhibits this protein. As to expression, pancreas and other tissues and body fluids (indicating it may have other physiological functions besides its role in digestion).

The protein resides in the secreted. It catalyses the reaction an [RNA] containing cytidine + H2O = an [RNA]-3'-cytidine-3'-phosphate + a 5'-hydroxy-ribonucleotide-3'-[RNA].. It carries out the reaction an [RNA] containing uridine + H2O = an [RNA]-3'-uridine-3'-phosphate + a 5'-hydroxy-ribonucleotide-3'-[RNA].. Endonuclease that catalyzes the cleavage of RNA on the 3' side of pyrimidine nucleotides. Acts on single-stranded and double-stranded RNA. The polypeptide is Ribonuclease pancreatic (RNASE1) (Semnopithecus entellus (Northern plains gray langur)).